Consider the following 330-residue polypeptide: Ketol-acid reductoisomerase (NADP(+)) (330 aa).

One can recognise a KARI N-terminal Rossmann domain in the interval 1–181 (MKVYYEQDAT…GGARSGVIET (181 aa)). Residues 24–27 (YGSQ), Arg47, and 82–85 (DQVQ) each bind NADP(+). His107 is an active-site residue. Residue Gly133 coordinates NADP(+). Residues 182-327 (TFKEETETDL…GKLRGMMPWL (146 aa)) enclose the KARI C-terminal knotted domain. Mg(2+) contacts are provided by Asp190, Glu194, Glu226, and Glu230. Residue Ser251 participates in substrate binding.

It belongs to the ketol-acid reductoisomerase family. Requires Mg(2+) as cofactor.

It carries out the reaction (2R)-2,3-dihydroxy-3-methylbutanoate + NADP(+) = (2S)-2-acetolactate + NADPH + H(+). The catalysed reaction is (2R,3R)-2,3-dihydroxy-3-methylpentanoate + NADP(+) = (S)-2-ethyl-2-hydroxy-3-oxobutanoate + NADPH + H(+). Its pathway is amino-acid biosynthesis; L-isoleucine biosynthesis; L-isoleucine from 2-oxobutanoate: step 2/4. It functions in the pathway amino-acid biosynthesis; L-valine biosynthesis; L-valine from pyruvate: step 2/4. Functionally, involved in the biosynthesis of branched-chain amino acids (BCAA). Catalyzes an alkyl-migration followed by a ketol-acid reduction of (S)-2-acetolactate (S2AL) to yield (R)-2,3-dihydroxy-isovalerate. In the isomerase reaction, S2AL is rearranged via a Mg-dependent methyl migration to produce 3-hydroxy-3-methyl-2-ketobutyrate (HMKB). In the reductase reaction, this 2-ketoacid undergoes a metal-dependent reduction by NADPH to yield (R)-2,3-dihydroxy-isovalerate. This Nitratidesulfovibrio vulgaris (strain DSM 19637 / Miyazaki F) (Desulfovibrio vulgaris) protein is Ketol-acid reductoisomerase (NADP(+)).